The following is an 80-amino-acid chain: Translation initiation factor IF-1, chloroplastic (80 aa).

The S1-like domain occupies M1–R72.

Belongs to the IF-1 family. Component of the 30S ribosomal translation pre-initiation complex which assembles on the 30S ribosome in the order IF-2 and IF-3, IF-1 and N-formylmethionyl-tRNA(fMet); mRNA recruitment can occur at any time during PIC assembly.

The protein localises to the plastid. The protein resides in the chloroplast. In terms of biological role, one of the essential components for the initiation of protein synthesis. Stabilizes the binding of IF-2 and IF-3 on the 30S subunit to which N-formylmethionyl-tRNA(fMet) subsequently binds. Helps modulate mRNA selection, yielding the 30S pre-initiation complex (PIC). Upon addition of the 50S ribosomal subunit IF-1, IF-2 and IF-3 are released leaving the mature 70S translation initiation complex. The chain is Translation initiation factor IF-1, chloroplastic from Psilotum nudum (Whisk fern).